The chain runs to 464 residues: ATP synthase subunit beta (464 aa).

153–160 (GGAGVGKT) provides a ligand contact to ATP.

This sequence belongs to the ATPase alpha/beta chains family. In terms of assembly, F-type ATPases have 2 components, CF(1) - the catalytic core - and CF(0) - the membrane proton channel. CF(1) has five subunits: alpha(3), beta(3), gamma(1), delta(1), epsilon(1). CF(0) has three main subunits: a(1), b(2) and c(9-12). The alpha and beta chains form an alternating ring which encloses part of the gamma chain. CF(1) is attached to CF(0) by a central stalk formed by the gamma and epsilon chains, while a peripheral stalk is formed by the delta and b chains.

It is found in the cell inner membrane. It catalyses the reaction ATP + H2O + 4 H(+)(in) = ADP + phosphate + 5 H(+)(out). Produces ATP from ADP in the presence of a proton gradient across the membrane. The catalytic sites are hosted primarily by the beta subunits. This chain is ATP synthase subunit beta, found in Burkholderia vietnamiensis (strain G4 / LMG 22486) (Burkholderia cepacia (strain R1808)).